Consider the following 216-residue polypeptide: Nicotinamidase (216 aa).

Asp8 is a catalytic residue. 3 residues coordinate Zn(2+): Asp51, His53, and His94. The active site involves Lys122. The active-site Nucleophile is Cys167.

This sequence belongs to the isochorismatase family.

Its subcellular location is the cytoplasm. The protein localises to the nucleus. The protein resides in the peroxisome. The catalysed reaction is nicotinamide + H2O = nicotinate + NH4(+). The protein operates within cofactor biosynthesis; nicotinate biosynthesis; nicotinate from nicotinamide: step 1/1. Its activity is regulated as follows. Inhibited by N-ethylmaleimide, HgCl(2) and PCMB. Competitively inhibited by NAD, NMN and 3-acetylpyridine. Catalyzes the deamidation of nicotinamide, an early step in the NAD(+) salvage pathway. Positively regulates SIR2-mediated silencing and longevity by preventing the accumulation of intracellular nicotinamide, an inhibitor of SIR2, during times of stress. Also acts on nicotinyl hydroxamate. The protein is Nicotinamidase (PNC1) of Saccharomyces cerevisiae (strain ATCC 204508 / S288c) (Baker's yeast).